Consider the following 365-residue polypeptide: tRNA/tmRNA (uracil-C(5))-methyltransferase (365 aa).

The S-adenosyl-L-methionine site is built by Q188, Y216, N221, E237, and D297. The active-site Nucleophile is the C322. Residue E356 is the Proton acceptor of the active site.

It belongs to the class I-like SAM-binding methyltransferase superfamily. RNA M5U methyltransferase family. TrmA subfamily.

It carries out the reaction uridine(54) in tRNA + S-adenosyl-L-methionine = 5-methyluridine(54) in tRNA + S-adenosyl-L-homocysteine + H(+). The catalysed reaction is uridine(341) in tmRNA + S-adenosyl-L-methionine = 5-methyluridine(341) in tmRNA + S-adenosyl-L-homocysteine + H(+). Functionally, dual-specificity methyltransferase that catalyzes the formation of 5-methyluridine at position 54 (m5U54) in all tRNAs, and that of position 341 (m5U341) in tmRNA (transfer-mRNA). The protein is tRNA/tmRNA (uracil-C(5))-methyltransferase of Aggregatibacter aphrophilus (strain NJ8700) (Haemophilus aphrophilus).